The following is a 197-amino-acid chain: GTP cyclohydrolase-2 (197 aa).

Arg-50 to Glu-54 contacts GTP. Zn(2+) is bound by residues Cys-55, Cys-66, and Cys-68. GTP is bound by residues Gln-71, Glu-93–Arg-95, and Thr-115. The active-site Proton acceptor is the Asp-127. Arg-129 serves as the catalytic Nucleophile. Thr-150 and Lys-155 together coordinate GTP.

Belongs to the GTP cyclohydrolase II family. Zn(2+) serves as cofactor.

It catalyses the reaction GTP + 4 H2O = 2,5-diamino-6-hydroxy-4-(5-phosphoribosylamino)-pyrimidine + formate + 2 phosphate + 3 H(+). It functions in the pathway cofactor biosynthesis; riboflavin biosynthesis; 5-amino-6-(D-ribitylamino)uracil from GTP: step 1/4. Its function is as follows. Catalyzes the conversion of GTP to 2,5-diamino-6-ribosylamino-4(3H)-pyrimidinone 5'-phosphate (DARP), formate and pyrophosphate. In Neisseria meningitidis serogroup A / serotype 4A (strain DSM 15465 / Z2491), this protein is GTP cyclohydrolase-2.